An 890-amino-acid chain; its full sequence is Alanine--tRNA ligase (890 aa).

Residues His568, His572, Cys680, and His684 each contribute to the Zn(2+) site.

This sequence belongs to the class-II aminoacyl-tRNA synthetase family. It depends on Zn(2+) as a cofactor.

The protein resides in the cytoplasm. It carries out the reaction tRNA(Ala) + L-alanine + ATP = L-alanyl-tRNA(Ala) + AMP + diphosphate. Catalyzes the attachment of alanine to tRNA(Ala) in a two-step reaction: alanine is first activated by ATP to form Ala-AMP and then transferred to the acceptor end of tRNA(Ala). Also edits incorrectly charged Ser-tRNA(Ala) and Gly-tRNA(Ala) via its editing domain. This chain is Alanine--tRNA ligase, found in Psychrobacter arcticus (strain DSM 17307 / VKM B-2377 / 273-4).